A 428-amino-acid chain; its full sequence is C4-dicarboxylate transport protein (428 aa).

8 helical membrane passes run 8-28, 44-64, 78-98, 148-168, 184-204, 222-242, 307-327, and 355-375; these read VLYVQVIFAIVVGVILGHYYP, LIKMVIGPIIFCTVVTGIAGM, LLYFEIVSTCALVLGLAATHI, GEILQILLIALLFGSVLAHLG, VLFGIVHIVTKLAPIGAFGAM, LIGTFYLTSVVFVLVVLGAIA, IYMTMAVLFIAQATNIELTWM, and AATLAVVPTIPLSGMVLILGI.

Belongs to the dicarboxylate/amino acid:cation symporter (DAACS) (TC 2.A.23) family.

The protein localises to the cell inner membrane. Responsible for the transport of dicarboxylates such as succinate, fumarate, and malate from the periplasm across the membrane. The sequence is that of C4-dicarboxylate transport protein from Burkholderia pseudomallei (strain 1106a).